Reading from the N-terminus, the 137-residue chain is MKVLSLLYLLTAIPGIMSDVQLQESGPGLVKPSQSLSLTCSVTGYSITSGYFWNWIRQFPGNKLEWLGFIKYDGSNGYNPSLKNRVSITRDTSENQFFLKLNSVTTEDTATYYCAGDNDHLYYFDYWGQGTTLTVSS.

Residues 1–18 (MKVLSLLYLLTAIPGIMS) form the signal peptide. Residues 19 to 48 (DVQLQESGPGLVKPSQSLSLTCSVTGYSIT) are framework-1. Residues Cys40 and Cys114 are joined by a disulfide bond. The interval 49-54 (SGYFWN) is complementarity-determining-1. The framework-2 stretch occupies residues 55–68 (WIRQFPGNKLEWLG). The segment at 69–84 (FIKYDGSNGYNPSLKN) is complementarity-determining-2. Residues 85–116 (RVSITRDTSENQFFLKLNSVTTEDTATYYCAG) are framework-3. The interval 117 to 126 (DNDHLYYFDY) is complementarity-determining-3. The segment at 127 to 137 (WGQGTTLTVSS) is framework-4.

The polypeptide is Ig heavy chain V region MOPC 315 (Mus musculus (Mouse)).